A 120-amino-acid chain; its full sequence is cAMP-responsive element-binding protein-like 2 (120 aa).

The tract at residues 1–24 is disordered; the sequence is MDDSKVVGGKVKKPGKRGRKPAKI. Positions 10 to 21 are enriched in basic residues; the sequence is KVKKPGKRGRKP. One can recognise a bZIP domain in the interval 23–86; that stretch reads KIDLKAKLER…MAMDQGKIPS (64 aa). Positions 29–60 are basic motif; sequence KLERSRQSARECRARKKLRYQYLEELVSSRER. Residues 62 to 69 are leucine-zipper; sequence ICALREEL. The interval 93-120 is disordered; that stretch reads TGEEQNKSQQNSSRHTKAGKTDANSNSW.

The protein belongs to the bZIP family. ATF subfamily. In terms of assembly, interacts with CREB1; regulates CREB1 phosphorylation, stability and transcriptional activity. Post-translationally, phosphorylated by AMPK.

It localises to the nucleus. Its function is as follows. Probable regulator of CREB1 transcriptional activity which is involved in adipose cells differentiation. May also play a regulatory role in the cell cycle. Identification in a chromosomal region frequently deleted in various cancers suggests that it might act as a tumor suppressor. This Homo sapiens (Human) protein is cAMP-responsive element-binding protein-like 2 (CREBL2).